Reading from the N-terminus, the 312-residue chain is MARLSEPSPYVEFDRTQWRALRMSTPLKLTEDELKKLRGLGEKLDLLEVEEVYLPLARLIHLQVAARQRLFAATSEFLGEPQQNPDRPVPFIIGVAGSVAVGKSTTARVLQALLARWGNHARVDLVTTDGFLYPNAELGRRNIMHRKGFPESYDRRALMRFVTAVKSGADYACAPVYSHLLYDIVPGEKQVIRHPDILILEGLNVLQTGPALMVSDLFDFSVYVDARLEDIEGWYISRFLTMRSTAFADPASHFHHYATLTDEQAVFAARDIWHSINRPNLIENILPTRPRATLVLRKDADHAINRLRLRKL.

97 to 104 (GSVAVGKS) serves as a coordination point for ATP.

It belongs to the prokaryotic pantothenate kinase family.

It localises to the cytoplasm. The catalysed reaction is (R)-pantothenate + ATP = (R)-4'-phosphopantothenate + ADP + H(+). It functions in the pathway cofactor biosynthesis; coenzyme A biosynthesis; CoA from (R)-pantothenate: step 1/5. The chain is Pantothenate kinase from Mycobacterium sp. (strain JLS).